We begin with the raw amino-acid sequence, 1289 residues long: Long-tail fiber proximal subunit (1289 aa).

The protein belongs to the tevenvirinae long-tail fiber proximal subunit protein family. In terms of assembly, the long-tail fibers are trimeric, with a stoichiometry of gp34/gp37/gp36/gp35 of 3:3:3:1.

Its subcellular location is the virion. Structural component of the proximal-half of the long-tail fiber. The long-tail fibers of T4 are about 1600 Angstroms long with a kink in the middle that divides the fiber into proximal and distal halves. The polypeptide is Long-tail fiber proximal subunit (34) (Escherichia coli (Bacteriophage T4)).